The chain runs to 387 residues: ATP phosphoribosyltransferase regulatory subunit (387 aa).

The protein belongs to the class-II aminoacyl-tRNA synthetase family. HisZ subfamily. Heteromultimer composed of HisG and HisZ subunits.

Its subcellular location is the cytoplasm. The protein operates within amino-acid biosynthesis; L-histidine biosynthesis; L-histidine from 5-phospho-alpha-D-ribose 1-diphosphate: step 1/9. Required for the first step of histidine biosynthesis. May allow the feedback regulation of ATP phosphoribosyltransferase activity by histidine. The polypeptide is ATP phosphoribosyltransferase regulatory subunit (Polynucleobacter necessarius subsp. necessarius (strain STIR1)).